Reading from the N-terminus, the 61-residue chain is Beta-defensin 13 (61 aa).

The N-terminal stretch at 1–21 (MRLLYLLFAAVMLLFLQAVPA) is a signal peptide. A 1,2-diacyl-sn-glycero-3-phosphate contacts are provided by serine 24, arginine 40, histidine 44, asparagine 51, asparagine 53, glycine 54, histidine 58, and lysine 61. 3 disulfide bridges follow: cysteine 31–cysteine 59, cysteine 38–cysteine 52, and cysteine 42–cysteine 60.

Belongs to the beta-defensin family. As to quaternary structure, monomeric. Forms multimeric, probably including tetrameric, complexes in the presence of phospholipid phosphatidic acid.

It localises to the secreted. Functionally, exhibits antimicrobial activity against fungi. Antimicrobial activity in a pH-dependent manner against the yeast C.albicans; activity is salt tolerant and retains antifungal activity in NaCl concentrations of 100mM. Permeabilizes C.albicans cell membranes via targeting plasma membrane phospholipid phosphatidic acid. In Crocodylus porosus (Saltwater crocodile), this protein is Beta-defensin 13.